A 291-amino-acid polypeptide reads, in one-letter code: ATP synthase gamma chain (291 aa).

The protein belongs to the ATPase gamma chain family. As to quaternary structure, F-type ATPases have 2 components, CF(1) - the catalytic core - and CF(0) - the membrane proton channel. CF(1) has five subunits: alpha(3), beta(3), gamma(1), delta(1), epsilon(1). CF(0) has three main subunits: a, b and c.

Its subcellular location is the cell inner membrane. Produces ATP from ADP in the presence of a proton gradient across the membrane. The gamma chain is believed to be important in regulating ATPase activity and the flow of protons through the CF(0) complex. The sequence is that of ATP synthase gamma chain from Burkholderia ambifaria (strain MC40-6).